The primary structure comprises 299 residues: Coenzyme PQQ synthesis protein B (299 aa).

Belongs to the PqqB family.

It participates in cofactor biosynthesis; pyrroloquinoline quinone biosynthesis. May be involved in the transport of PQQ or its precursor to the periplasm. The chain is Coenzyme PQQ synthesis protein B from Xanthomonas oryzae pv. oryzae (strain MAFF 311018).